We begin with the raw amino-acid sequence, 155 residues long: Gas vesicle protein K (155 aa).

It belongs to the gas vesicle GvpK family.

Its subcellular location is the gas vesicle. Its function is as follows. Might be involved in nucleating gas vesicle formation. Gas vesicles (GV) are hollow, gas filled proteinaceous nanostructures. During planktonic growth they allow positioning of the organism at a favorable depth for light or nutrient acquisition. Cluster expression in E.coli (gvpA1-gvpA2-gvpC-gvpN-gvpJ-gvpK-gvpF-gvpG-gvpV-gvpW) allows cells to float and produces irregularly shaped gas vesicles. This chain is Gas vesicle protein K, found in Nostoc sp. (strain PCC 7120 / SAG 25.82 / UTEX 2576).